The primary structure comprises 202 residues: Orotate phosphoribosyltransferase (202 aa).

5-phospho-alpha-D-ribose 1-diphosphate is bound by residues lysine 93 and 113 to 121; that span reads EDIITTGGS. Residues threonine 117 and arginine 145 each contribute to the orotate site.

It belongs to the purine/pyrimidine phosphoribosyltransferase family. PyrE subfamily. Homodimer. Mg(2+) serves as cofactor.

It catalyses the reaction orotidine 5'-phosphate + diphosphate = orotate + 5-phospho-alpha-D-ribose 1-diphosphate. It functions in the pathway pyrimidine metabolism; UMP biosynthesis via de novo pathway; UMP from orotate: step 1/2. In terms of biological role, catalyzes the transfer of a ribosyl phosphate group from 5-phosphoribose 1-diphosphate to orotate, leading to the formation of orotidine monophosphate (OMP). This Campylobacter curvus (strain 525.92) protein is Orotate phosphoribosyltransferase.